Consider the following 270-residue polypeptide: MEIVHAIGGGQGDPLVIAGKAYTSRLLVGTGKYKDLAETRAAVEMAGAEIVTVAIRRTNIGQDPGQPSLLDVIPPDRYTILPNTAGCYTVEDAVRTCRLARELLGGHRLVKLEVLGDPTTLFPDVTATLEAAEILVRDGFDVMVYTNDDPIIAKRLEEIGCVAVMPLAAPIGSGLGIRNPYNILTIVENAKVPVLVDAGVGTASDAAVAMELGCDGVLMNTAIAEAKNPVLMASAMKKAIEAGREAFLAGRMPRRRFASASSPLAGLFFD.

Catalysis depends on Lys-111, which acts as the Schiff-base intermediate with DXP. 1-deoxy-D-xylulose 5-phosphate contacts are provided by residues Gly-172, 198–199 (AG), and 220–221 (NT).

It belongs to the ThiG family. Homotetramer. Forms heterodimers with either ThiH or ThiS.

The protein resides in the cytoplasm. It catalyses the reaction [ThiS sulfur-carrier protein]-C-terminal-Gly-aminoethanethioate + 2-iminoacetate + 1-deoxy-D-xylulose 5-phosphate = [ThiS sulfur-carrier protein]-C-terminal Gly-Gly + 2-[(2R,5Z)-2-carboxy-4-methylthiazol-5(2H)-ylidene]ethyl phosphate + 2 H2O + H(+). It functions in the pathway cofactor biosynthesis; thiamine diphosphate biosynthesis. Functionally, catalyzes the rearrangement of 1-deoxy-D-xylulose 5-phosphate (DXP) to produce the thiazole phosphate moiety of thiamine. Sulfur is provided by the thiocarboxylate moiety of the carrier protein ThiS. In vitro, sulfur can be provided by H(2)S. This is Thiazole synthase from Methylococcus capsulatus (strain ATCC 33009 / NCIMB 11132 / Bath).